Consider the following 143-residue polypeptide: HTH-type transcriptional regulator MntR (143 aa).

Positions 1–63 (MPTPSMEDYL…YERYRGLVLT (63 aa)) constitute an HTH dtxR-type domain. Mn(2+)-binding residues include D8, E11, H77, E99, E102, and H103.

The protein belongs to the DtxR/MntR family. Homodimer.

The protein localises to the cytoplasm. DNA binding is strongly activated by Mn(2+). Its function is as follows. Central regulator of manganese homeostasis. The polypeptide is HTH-type transcriptional regulator MntR (Shouchella clausii (strain KSM-K16) (Alkalihalobacillus clausii)).